A 676-amino-acid chain; its full sequence is DNA ligase (676 aa).

Residues 35 to 39, 84 to 85, and E118 each bind NAD(+); these read DYEFD and SL. Catalysis depends on K120, which acts as the N6-AMP-lysine intermediate. 4 residues coordinate NAD(+): R141, E184, K299, and K323. Zn(2+) is bound by residues C417, C420, C435, and C441. A BRCT domain is found at 600-676; that stretch reads LINRNFEGVN…ISEDEFNAML (77 aa).

The protein belongs to the NAD-dependent DNA ligase family. LigA subfamily. Mg(2+) is required as a cofactor. It depends on Mn(2+) as a cofactor.

It catalyses the reaction NAD(+) + (deoxyribonucleotide)n-3'-hydroxyl + 5'-phospho-(deoxyribonucleotide)m = (deoxyribonucleotide)n+m + AMP + beta-nicotinamide D-nucleotide.. Its function is as follows. DNA ligase that catalyzes the formation of phosphodiester linkages between 5'-phosphoryl and 3'-hydroxyl groups in double-stranded DNA using NAD as a coenzyme and as the energy source for the reaction. It is essential for DNA replication and repair of damaged DNA. In Chlorobium phaeobacteroides (strain DSM 266 / SMG 266 / 2430), this protein is DNA ligase.